The following is a 579-amino-acid chain: DNA ligase 1 (579 aa).

Glutamate 244 contributes to the ATP binding site. The active-site N6-AMP-lysine intermediate is the lysine 246. Residues arginine 251, arginine 266, glutamate 296, phenylalanine 342, arginine 419, and lysine 425 each contribute to the ATP site.

It belongs to the ATP-dependent DNA ligase family. Requires Mg(2+) as cofactor.

It catalyses the reaction ATP + (deoxyribonucleotide)n-3'-hydroxyl + 5'-phospho-(deoxyribonucleotide)m = (deoxyribonucleotide)n+m + AMP + diphosphate.. DNA ligase that seals nicks in double-stranded DNA during DNA replication, DNA recombination and DNA repair. The protein is DNA ligase 1 of Methanosarcina mazei (strain ATCC BAA-159 / DSM 3647 / Goe1 / Go1 / JCM 11833 / OCM 88) (Methanosarcina frisia).